Consider the following 397-residue polypeptide: Enoyl-[acyl-carrier-protein] reductase [NADH] (397 aa).

Residues 48-53, 74-75, 111-112, and 139-140 each bind NAD(+); these read GASTGY, FE, DA, and VA. Tyr225 is a binding site for substrate. Tyr235 serves as the catalytic Proton donor. NAD(+)-binding positions include Lys244 and 273-275; that span reads VVT.

The protein belongs to the TER reductase family. Monomer.

It carries out the reaction a 2,3-saturated acyl-[ACP] + NAD(+) = a (2E)-enoyl-[ACP] + NADH + H(+). The protein operates within lipid metabolism; fatty acid biosynthesis. Functionally, involved in the final reduction of the elongation cycle of fatty acid synthesis (FAS II). Catalyzes the reduction of a carbon-carbon double bond in an enoyl moiety that is covalently linked to an acyl carrier protein (ACP). The chain is Enoyl-[acyl-carrier-protein] reductase [NADH] from Burkholderia mallei (strain SAVP1).